The primary structure comprises 1052 residues: Eukaryotic translation initiation factor 3 subunit A (1052 aa).

Residues 325–505 (IQYAASAVLL…GSLHFNNNIF (181 aa)) enclose the PCI domain. Coiled coils occupy residues 568-712 (REHV…RLRE) and 769-882 (EKTA…SAQT). Composition is skewed to basic and acidic residues over residues 570–600 (HVSN…EQMQ) and 793–874 (KIRL…EQEK). 2 disordered regions span residues 570 to 606 (HVSN…HQNQ) and 793 to 1052 (KIRL…DDKN). 2 stretches are compositionally biased toward polar residues: residues 875 to 887 (LSNL…QPTW) and 895 to 906 (APTTAAPSSMRV). Composition is skewed to basic and acidic residues over residues 942–952 (DRGDRAPRDTG), 960–970 (DRGDRAPRDTG), 979–1013 (RAPR…ERRA), and 1037–1052 (GSER…DDKN).

This sequence belongs to the eIF-3 subunit A family. As to quaternary structure, component of the eukaryotic translation initiation factor 3 (eIF-3) complex.

The protein resides in the cytoplasm. Functionally, RNA-binding component of the eukaryotic translation initiation factor 3 (eIF-3) complex, which is involved in protein synthesis of a specialized repertoire of mRNAs and, together with other initiation factors, stimulates binding of mRNA and methionyl-tRNAi to the 40S ribosome. The eIF-3 complex specifically targets and initiates translation of a subset of mRNAs involved in cell proliferation. In Monosiga brevicollis (Choanoflagellate), this protein is Eukaryotic translation initiation factor 3 subunit A.